The sequence spans 664 residues: PAN2-PAN3 deadenylation complex subunit PAN3 (664 aa).

Disordered stretches follow at residues 1–27 (MATT…GREN) and 54–134 (DPHK…PGTM). A C3H1-type zinc finger spans residues 27-56 (NAKDTLCRNVTIYGRCRYEDKGCAFNHDPH). Over residues 74–96 (DSPSFTPSILSSNGSSPTSQSAT) the composition is skewed to polar residues. The span at 115-131 (PRSISSRSNSSTPTTRP) shows a compositional bias: low complexity. Positions 265–525 (QTLPNTQLPA…NIDIFITGIS (261 aa)) are pseudokinase domain. Residues Arg317, 366-373 (DYHPLSKT), and 425-426 (SK) each bind ATP. Residues 526 to 564 (STLMSTFDSALHLDDQLTSDLSRELENGRLVRLMTKLNF) adopt a coiled-coil conformation. The tract at residues 565 to 664 (VNERPEYEHD…LKPSASRRLH (100 aa)) is knob domain.

This sequence belongs to the protein kinase superfamily. PAN3 family. As to quaternary structure, homodimer. Forms a heterotrimer with a catalytic subunit pan2 to form the poly(A)-nuclease (PAN) deadenylation complex. Interacts (via PAM-2 motif) with poly(A)-binding protein pab1 (via PABC domain), conferring substrate specificity of the enzyme complex.

Its subcellular location is the cytoplasm. Regulatory subunit of the poly(A)-nuclease (PAN) deadenylation complex, one of two cytoplasmic mRNA deadenylases involved in mRNA turnover. PAN specifically shortens poly(A) tails of RNA and the activity is stimulated by poly(A)-binding protein pab1. PAN deadenylation is followed by rapid degradation of the shortened mRNA tails by the CCR4-NOT complex. Deadenylated mRNAs are then degraded by two alternative mechanisms, namely exosome-mediated 3'-5' exonucleolytic degradation, or deadenylation-dependent mRNA decaping and subsequent 5'-3' exonucleolytic degradation by xrn1. May also be involved in post-transcriptional maturation of mRNA poly(A) tails. pan3 acts as a positive regulator for PAN activity, recruiting the catalytic subunit pan2 to mRNA via its interaction with RNA and with pab1. The sequence is that of PAN2-PAN3 deadenylation complex subunit PAN3 from Aspergillus niger (strain ATCC MYA-4892 / CBS 513.88 / FGSC A1513).